Reading from the N-terminus, the 473-residue chain is Bifunctional protein HldE (473 aa).

Residues 1–318 (MKLSMPRFDQ…RAIQREEGSE (318 aa)) are ribokinase. 194–197 (NLSE) contacts ATP. Residue Asp-263 is part of the active site. The interval 343 to 473 (FTNGCFDILH…TAIVEKIRKN (131 aa)) is cytidylyltransferase.

In the N-terminal section; belongs to the carbohydrate kinase PfkB family. The protein in the C-terminal section; belongs to the cytidylyltransferase family. In terms of assembly, homodimer.

The catalysed reaction is D-glycero-beta-D-manno-heptose 7-phosphate + ATP = D-glycero-beta-D-manno-heptose 1,7-bisphosphate + ADP + H(+). It catalyses the reaction D-glycero-beta-D-manno-heptose 1-phosphate + ATP + H(+) = ADP-D-glycero-beta-D-manno-heptose + diphosphate. It participates in nucleotide-sugar biosynthesis; ADP-L-glycero-beta-D-manno-heptose biosynthesis; ADP-L-glycero-beta-D-manno-heptose from D-glycero-beta-D-manno-heptose 7-phosphate: step 1/4. It functions in the pathway nucleotide-sugar biosynthesis; ADP-L-glycero-beta-D-manno-heptose biosynthesis; ADP-L-glycero-beta-D-manno-heptose from D-glycero-beta-D-manno-heptose 7-phosphate: step 3/4. Catalyzes the phosphorylation of D-glycero-D-manno-heptose 7-phosphate at the C-1 position to selectively form D-glycero-beta-D-manno-heptose-1,7-bisphosphate. Its function is as follows. Catalyzes the ADP transfer from ATP to D-glycero-beta-D-manno-heptose 1-phosphate, yielding ADP-D-glycero-beta-D-manno-heptose. The protein is Bifunctional protein HldE of Pseudomonas putida (strain GB-1).